A 591-amino-acid chain; its full sequence is Adenine deaminase (591 aa).

Belongs to the metallo-dependent hydrolases superfamily. Adenine deaminase family. Homodimer. Requires Mn(2+) as cofactor.

It catalyses the reaction adenine + H2O + H(+) = hypoxanthine + NH4(+). In Edwardsiella ictaluri (strain 93-146), this protein is Adenine deaminase.